The chain runs to 305 residues: MNTSQPALHTSMLTSLPLLARGKVRDNYAVGIDRILMVASDRLSAFDVIMGEPIPGKGALLTQMALFWFDKLGPKGLNLCPIHLTGDAPESVVTAAEVPQVTGRSMLVKRLKPLPVEAVVRGYLAGSGWKEYQHNGAVCGVKLPAGLQNASKLPEPIYTPAAKAAAGDHDENITFEQTVEMIGLDLATRIRDISIAIYKAASEIARAKGIIIADTKFEFGLDADGTLTLMDEVLTPDSSRFWPAESYQEGINPPSFDKQFVRDWLEQVQVNGKPWNKTPPAPRVPDEVIAKTAAKYQEALTRLIG.

This sequence belongs to the SAICAR synthetase family.

The catalysed reaction is 5-amino-1-(5-phospho-D-ribosyl)imidazole-4-carboxylate + L-aspartate + ATP = (2S)-2-[5-amino-1-(5-phospho-beta-D-ribosyl)imidazole-4-carboxamido]succinate + ADP + phosphate + 2 H(+). It participates in purine metabolism; IMP biosynthesis via de novo pathway; 5-amino-1-(5-phospho-D-ribosyl)imidazole-4-carboxamide from 5-amino-1-(5-phospho-D-ribosyl)imidazole-4-carboxylate: step 1/2. The sequence is that of Phosphoribosylaminoimidazole-succinocarboxamide synthase from Albidiferax ferrireducens (strain ATCC BAA-621 / DSM 15236 / T118) (Rhodoferax ferrireducens).